Consider the following 313-residue polypeptide: Olfactory receptor 5D18 (313 aa).

The Extracellular segment spans residues Met-1–Val-26. An N-linked (GlcNAc...) asparagine glycan is attached at Asn-7. Residues Pro-27–Ile-47 form a helical membrane-spanning segment. The Cytoplasmic segment spans residues Val-48–Lys-55. The chain crosses the membrane as a helical span at residues Leu-56 to Ser-76. Residues Ile-77 to Val-100 are Extracellular-facing. Residues Cys-98 and Cys-190 are joined by a disulfide bond. A helical transmembrane segment spans residues Gln-101 to Tyr-121. The Cytoplasmic portion of the chain corresponds to Asp-122 to Lys-140. The chain crosses the membrane as a helical span at residues Leu-141–Thr-161. Topologically, residues Cys-162–Gln-197 are extracellular. A helical membrane pass occupies residues Trp-198–Ser-218. At Tyr-219–Ala-238 the chain is on the cytoplasmic side. Residues Phe-239–Leu-259 form a helical membrane-spanning segment. At Tyr-260–Val-272 the chain is on the extracellular side. Residues Lys-273–Leu-293 traverse the membrane as a helical segment. The Cytoplasmic segment spans residues Arg-294–Tyr-313.

The protein belongs to the G-protein coupled receptor 1 family.

The protein localises to the cell membrane. In terms of biological role, odorant receptor. The chain is Olfactory receptor 5D18 (OR5D18) from Homo sapiens (Human).